The chain runs to 3966 residues: Histone-lysine N-methyltransferase 2A (3966 aa).

Disordered stretches follow at residues 1–106 (MAHS…LLRV) and 130–231 (VFGE…GVKI). The short motif at 6 to 25 (RWRFPARPGTTGGGGGGGRR) is the Menin-binding motif (MBM) element. Over residues 15–29 (TTGGGGGGGRRGLGG) the composition is skewed to gly residues. Over residues 75–102 (GAAAASAASSSSASSSSSSSSSASSGPA) the composition is skewed to low complexity. The Integrase domain-binding motif 1 (IBM1) signature appears at 121 to 132 (GTNLRRFRAVFG). 2 positions are modified to phosphoserine; by CK2: Ser-134 and Ser-140. An Integrase domain-binding motif 2 (IBM2) motif is present at residues 145 to 150 (QFLGFG). Ser-151 carries the phosphoserine modification. The a.T hook 1 DNA-binding region spans 167–178 (KASPRKPRGRPR). A Phosphoserine modification is found at Ser-195. Residues 200-218 (SETKSADKIKKKDSKSIEK) show a composition bias toward basic and acidic residues. A DNA-binding region (a.T hook 2) is located at residues 215 to 225 (SIEKKRGRPPT). An N6-acetyllysine modification is found at Lys-237. The a.T hook 3 DNA-binding region spans 299–307 (RRRGRPPST). The tract at residues 322 to 343 (LEKPQKVRKDKEGTPPLTKEDK) is disordered. Lys-371 bears the N6-acetyllysine mark. A disordered region spans residues 440-590 (RLESTPNSRF…PWLMPPTIPL (151 aa)). The span at 450–489 (SATSCGSSEKSSAASQHSSQMSSDSSRSSSPSIDTTSDSQ) shows a compositional bias: low complexity. At Ser-516 the chain carries Phosphoserine. A compositionally biased stretch (low complexity) spans 544 to 557 (LPTLQSAPQQQTSS). Residues 558–571 (SPPPPLLTPPPPLQ) are compositionally biased toward pro residues. The residue at position 634 (Lys-634) is an N6-acetyllysine. Ser-678 is modified (phosphoserine). Disordered regions lie at residues 711–943 (ESVT…ADVA), 963–1003 (RGNL…TSSI), 1034–1064 (IEKSKSLKQTDQPKAQGQESDSSETSVRGPR), and 1101–1161 (ILSS…CQVP). Low complexity-rich tracts occupy residues 717–730 (SNRTSSGASSSGVS) and 760–790 (LSTSELSPLTPPSSVSSSLSIPVSPLAASAL). Polar residues-rich tracts occupy residues 791–806 (NPTFTFPSHSLTQSGE) and 817–830 (QTSALAEPFSSNSP). Position 837 is a phosphothreonine (Thr-837). Basic and acidic residues predominate over residues 843-887 (EKGRKKDTAPEELSKDRDADKSVEKDKSRERDREREKENKRESRK). Ser-923 is modified (phosphoserine). Residues 989-1003 (SAPSSSTVKHSTSSI) are compositionally biased toward low complexity. Positions 1040–1059 (LKQTDQPKAQGQESDSSETS) are enriched in polar residues. Residue Ser-1053 is modified to Phosphoserine. Residues 1101–1111 (ILSSMGNDDKS) are compositionally biased toward basic and acidic residues. Lys-1127 carries the post-translational modification N6-acetyllysine. A CXXC-type zinc finger spans residues 1144 to 1192 (KKGRRSRRCGQCPGCQVPEDCGICTNCLDKPKFGGRNIKKQCCKMRKCQ). Zn(2+) is bound by residues Cys-1152, Cys-1155, Cys-1158, Cys-1164, Cys-1167, Cys-1170, Cys-1186, and Cys-1191. Residues 1196–1390 (WMPSKASLQK…PLSNGISSKQ (195 aa)) form a disordered region. The span at 1217–1229 (SKTTEKKESKEST) shows a compositional bias: basic and acidic residues. The segment covering 1230–1241 (AVKSPLEPAQKA) has biased composition (low complexity). Lys-1232 is modified (N6-acetyllysine). Residues 1245–1270 (PREEPAPKKSSSEPPPRKPVEEKSEE) are compositionally biased toward basic and acidic residues. The segment covering 1369–1390 (KQENAGTLNILNPLSNGISSKQ) has biased composition (polar residues). PHD-type zinc fingers lie at residues 1430 to 1481 (RVVC…CKFC), 1478 to 1532 (CKFC…CVRC), and 1565 to 1629 (GNFC…CTER). Positions 1583–1599 (KMMQCGKCDRWVHSKCE) are interaction with histone H3K4me3. The Bromo domain maps to 1637 to 1767 (ALEKELQASL…SFFIRQMERV (131 aa)). 2 disordered regions span residues 1665–1714 (YRQA…EGVK) and 1807–1870 (WQER…PGID). The segment covering 1828–1849 (APKPKGPGEPDSPTPLHPPTPP) has biased composition (pro residues). Phosphoserine is present on Ser-1839. A Phosphothreonine modification is found at Thr-1847. Position 1860 is a phosphoserine (Ser-1860). The segment at 1872–1912 (NRQCALCLMYGDDSANDAGRLLYIGQNEWTHVNCALWSAEV) adopts a C2HC pre-PHD-type zinc-finger fold. The PHD-type 4 zinc finger occupies 1933–1980 (LRCEFCQKPGATVGCCLTSCTSNYHFMCSRAKNCVFLDDKKVYCQRHR). The FYR N-terminal domain occupies 2020 to 2076 (NIHMMIGSMTIDCLGILNDLSDCEDKLFPIGYQCSRVYWSTTDARKRCVYTCKIMEC). Phosphoserine is present on Ser-2100. A disordered region spans residues 2147–2174 (RTPSYSPTQRSPGCRPLPSAGSPTPTTH). Residue Thr-2148 is modified to Phosphothreonine. Residues Ser-2152 and Ser-2202 each carry the phosphoserine modification. 4 disordered regions span residues 2214–2339 (VRTG…ATPG), 2371–2619 (RGQR…SARA), 2639–2673 (EDIPFYSNSTGKKRGKRSAEGQVDGADDLSTSDED), and 2709–2759 (KISQ…DAGE). Residues 2218–2230 (SAYSRSSVSSVPS) show a composition bias toward low complexity. Composition is skewed to polar residues over residues 2250–2284 (LSSSANLGHSAPPSSSSQRTVGGSKTSHLDGSSPS) and 2308–2320 (TSSSKSTDGSAHS). 2 stretches are compositionally biased toward basic and acidic residues: residues 2411 to 2422 (ILHEHIGSSSRD) and 2430 to 2440 (SSKETCKEKHS). The segment covering 2498 to 2509 (GQSTQVEGSSKE) has biased composition (polar residues). Lys-2524 is covalently cross-linked (Glycyl lysine isopeptide (Lys-Gly) (interchain with G-Cter in SUMO2)). Polar residues predominate over residues 2528–2537 (ENQSKNTQKE). Phosphoserine is present on Ser-2560. Residues 2569 to 2588 (PSPNNTLSQDPQSNNYQNLP) show a composition bias toward polar residues. Ser-2607 bears the Phosphoserine mark. The segment covering 2609–2618 (KRRYPRRSAR) has biased composition (basic residues). Acidic residues predominate over residues 2663–2673 (GADDLSTSDED). Residues 2722 to 2737 (SDTSVTATSRKSSQIP) show a composition bias toward polar residues. Over residues 2740 to 2759 (NGKENGTENLKIDRPEDAGE) the composition is skewed to basic and acidic residues. A Phosphoserine modification is found at Ser-2792. A 9aaTAD motif is present at residues 2843–2851 (SDIMDFVLK). Ser-2951 carries the post-translational modification Phosphoserine. Lys-2954 is subject to N6-acetyllysine. Disordered stretches follow at residues 2958–3060 (ITEK…NAAV) and 3164–3239 (AAQS…PSNI). The span at 3012 to 3025 (HGNSQDLTRNSGTP) shows a compositional bias: polar residues. The residue at position 3032 (Ser-3032) is a Phosphoserine. Polar residues predominate over residues 3035 to 3060 (VPVQNQKYVPSSTDSPGPSQISNAAV). Residues 3167 to 3178 (SSFPPNISSPPS) show a composition bias toward low complexity. The span at 3196–3212 (EANQRTDLTTTVATPSS) shows a compositional bias: polar residues. Basic residues predominate over residues 3214–3229 (LKKRPISRLHTRKNKK). A Phosphothreonine modification is found at Thr-3369. Lys-3459 bears the N6-acetyllysine mark. The disordered stretch occupies residues 3462–3640 (TLTSQRDRDP…AMEEEESGFS (179 aa)). Over residues 3475–3487 (PGTQPSNFTQTAE) the composition is skewed to polar residues. Residues 3501 to 3528 (PSAKPASSASPGSSPSSGQQSGSSSVPG) are compositionally biased toward low complexity. 2 positions are modified to phosphoserine: Ser-3510 and Ser-3523. Residues 3558–3570 (TSSEAHIPHRDTD) are compositionally biased toward basic and acidic residues. The FYR C-terminal domain occupies 3663 to 3744 (KKGLVFEISS…KHCRNYKFRF (82 aa)). The short motif at 3759 to 3764 (GSARAE) is the WDR5 interaction motif (WIN) element. The tract at residues 3782 to 3805 (HRQPPEYNPNDEEEEEVQLKSARR) is disordered. The SET domain occupies 3826 to 3942 (EAVGVYRSPI…RGEELTYDYK (117 aa)). The S-adenosyl-L-methionine site is built by His-3836 and Arg-3838. S-methylcysteine; by autocatalysis is present on Cys-3879. Residues Tyr-3880 and 3903-3904 (NH) each bind S-adenosyl-L-methionine. The Zn(2+) site is built by Cys-3906 and Cys-3954. Residues 3950–3966 (NKLPCNCGAKKCRKFLN) form the Post-SET domain. Asn-3955 serves as a coordination point for S-adenosyl-L-methionine. Zn(2+) is bound by residues Cys-3956 and Cys-3961.

This sequence belongs to the class V-like SAM-binding methyltransferase superfamily. Histone-lysine methyltransferase family. TRX/MLL subfamily. As to quaternary structure, MLL cleavage product N320 heterodimerizes with MLL cleavage product C180 (via SET and FYRC domains). Component of some MLL1/MLL complex, at least composed of the core components KMT2A/MLL1, ASH2L, HCFC1/HCF1, HCFC2, WDR5, DPY30 and RBBP5, as well as the facultative components BACC1, CHD8, E2F6, HSP70, INO80C, KANSL1, LAS1L, MAX, MCRS1, MEN1, MGA, KAT8/MOF, PELP1, PHF20, PRP31, RING2, RUVB1/TIP49A, RUVB2/TIP49B, SENP3, TAF1, TAF4, TAF6, TAF7, TAF9 and TEX10. Interacts (via WIN motif) with WDR5; the interaction is direct. Interaction with WDR5 is required for stable interaction with ASH2L and RBBP5, and thereby also for optimal histone methyltransferase activity. Interacts with KAT8/MOF; the interaction is direct. Interacts with SBF1 and PPP1R15A. Interacts with ZNF335. Interacts with CLOCK and BMAL1 in a circadian manner. Interacts with PPIE; this results in decreased histone H3 methyltransferase activity. Interacts with CREBBP. Interacts with the WRAD complex composed of WDR5, RBBP5, ASH2L and DPY30. Interacts (via MBM motif) with MEN1. Interacts (via IBM motifs) with PSIP1 (via IBD domain) with moderate affinity whereas the KMT2A-MEN1 complex interacts with a greater affinity; MEN1 enhances interaction of KMT2A with PSIP1. Phosphorylation increases its affinity for PSIP1. Forms a complex with CREBBP and CREB1. Proteolytic cleavage by TASP1 generates MLL cleavage 3product N320 and MLL cleavage product C180, which reassemble through a non-covalent association. 2 cleavage sites exist, cleavage site 1 (CS1) and cleavage site 2 (CS2), to generate MLL cleavage products N320 and C180. CS2 is the major site. In terms of processing, phosphorylation increases its interaction with PSIP1. Post-translationally, auto-methylated at Cys-3879: auto-methylation is inhibited by the WRAD complex and unmodified histone H3.

It is found in the nucleus. The catalysed reaction is L-lysyl(4)-[histone H3] + S-adenosyl-L-methionine = N(6)-methyl-L-lysyl(4)-[histone H3] + S-adenosyl-L-homocysteine + H(+). It catalyses the reaction N(6)-methyl-L-lysyl(4)-[histone H3] + S-adenosyl-L-methionine = N(6),N(6)-dimethyl-L-lysyl(4)-[histone H3] + S-adenosyl-L-homocysteine + H(+). It carries out the reaction L-cysteinyl-[protein] + S-adenosyl-L-methionine = S-methyl-L-cysteinyl-[protein] + S-adenosyl-L-homocysteine + H(+). Histone methyltransferase that plays an essential role in early development and hematopoiesis. Catalytic subunit of the MLL1/MLL complex, a multiprotein complex that mediates both methylation of 'Lys-4' of histone H3 (H3K4me) complex and acetylation of 'Lys-16' of histone H4 (H4K16ac). Catalyzes methyl group transfer from S-adenosyl-L-methionine to the epsilon-amino group of 'Lys-4' of histone H3 (H3K4) via a non-processive mechanism. Part of chromatin remodeling machinery predominantly forms H3K4me1 and H3K4me2 methylation marks at active chromatin sites where transcription and DNA repair take place. Has weak methyltransferase activity by itself, and requires other component of the MLL1/MLL complex to obtain full methyltransferase activity. Has no activity toward histone H3 phosphorylated on 'Thr-3', less activity toward H3 dimethylated on 'Arg-8' or 'Lys-9', while it has higher activity toward H3 acetylated on 'Lys-9'. Binds to unmethylated CpG elements in the promoter of target genes and helps maintain them in the nonmethylated state. Required for transcriptional activation of HOXA9. Promotes PPP1R15A-induced apoptosis. Plays a critical role in the control of circadian gene expression and is essential for the transcriptional activation mediated by the CLOCK-BMAL1 heterodimer. Establishes a permissive chromatin state for circadian transcription by mediating a rhythmic methylation of 'Lys-4' of histone H3 (H3K4me) and this histone modification directs the circadian acetylation at H3K9 and H3K14 allowing the recruitment of CLOCK-BMAL1 to chromatin. Also has auto-methylation activity on Cys-3879 in absence of histone H3 substrate. This chain is Histone-lysine N-methyltransferase 2A (Kmt2a), found in Mus musculus (Mouse).